A 573-amino-acid polypeptide reads, in one-letter code: Probable D-xylulose kinase A (573 aa).

Substrate-binding residues include H100, R171, D287, and N288. ATP-binding positions include W368, 473 to 474 (GG), and N477.

It belongs to the FGGY kinase family.

It is found in the cytoplasm. The enzyme catalyses D-xylulose + ATP = D-xylulose 5-phosphate + ADP + H(+). Functionally, highly specific D-xylulose kinase which participates in the catabolism of xylose. Xylose is a major component of hemicelluloses such as xylan. Most fungi utilize D-xylose via three enzymatic reactions, xylose reductase (XR), xylitol dehydrogenase (XDH), and xylulokinase, to form xylulose 5-phosphate, which enters pentose phosphate pathway. In Aspergillus terreus (strain NIH 2624 / FGSC A1156), this protein is Probable D-xylulose kinase A (xkiA).